Reading from the N-terminus, the 432-residue chain is 3-phosphoshikimate 1-carboxyvinyltransferase (432 aa).

K23, S24, and R28 together coordinate 3-phosphoshikimate. Phosphoenolpyruvate is bound at residue K23. G95 and R123 together coordinate phosphoenolpyruvate. S167, Q169, D317, and K344 together coordinate 3-phosphoshikimate. Q169 contributes to the phosphoenolpyruvate binding site. Residue D317 is the Proton acceptor of the active site. Phosphoenolpyruvate is bound by residues R348 and R390.

It belongs to the EPSP synthase family. In terms of assembly, monomer.

It localises to the cytoplasm. The enzyme catalyses 3-phosphoshikimate + phosphoenolpyruvate = 5-O-(1-carboxyvinyl)-3-phosphoshikimate + phosphate. It functions in the pathway metabolic intermediate biosynthesis; chorismate biosynthesis; chorismate from D-erythrose 4-phosphate and phosphoenolpyruvate: step 6/7. Its function is as follows. Catalyzes the transfer of the enolpyruvyl moiety of phosphoenolpyruvate (PEP) to the 5-hydroxyl of shikimate-3-phosphate (S3P) to produce enolpyruvyl shikimate-3-phosphate and inorganic phosphate. The sequence is that of 3-phosphoshikimate 1-carboxyvinyltransferase from Staphylococcus aureus (strain MRSA252).